The chain runs to 107 residues: Pre-mRNA-splicing factor RDS3 (107 aa).

This sequence belongs to the PHF5 family. As to quaternary structure, component of the spliceosome where it interacts with CUS1, HSH49, HSH155, IST3 and RSE1. Also interacts with YRA1.

It is found in the nucleus. Its function is as follows. Required for pre-mRNA splicing. Involved in regulation of drug sensitivity and may play a role in multidrug resistance. This chain is Pre-mRNA-splicing factor RDS3 (RDS3), found in Saccharomyces cerevisiae (strain ATCC 204508 / S288c) (Baker's yeast).